We begin with the raw amino-acid sequence, 236 residues long: Probable calcium-binding protein CML30 (236 aa).

Residues 43–64 are disordered; it reads VVVVAKKRPEEEPRRPDPDADL. Over residues 49 to 60 the composition is skewed to basic and acidic residues; it reads KRPEEEPRRPDP. EF-hand domains lie at 59–94 and 96–131; these read DPDA…LGIA and SSAA…IPKR. The Ca(2+) site is built by aspartate 72, aspartate 74, aspartate 76, glutamate 83, aspartate 109, asparagine 111, aspartate 113, and glutamate 120. Residues 130 to 158 form a disordered region; it reads KRRKSHQQHPLPSTAAADEEAAAADEEYE. Acidic residues predominate over residues 146 to 158; that stretch reads ADEEAAAADEEYE. EF-hand domains lie at 161–196 and 202–236; these read EEER…LGLR and PAVA…VVKA. Residues aspartate 174, asparagine 176, aspartate 178, glutamate 185, aspartate 215, aspartate 217, aspartate 219, methionine 221, and glutamate 226 each coordinate Ca(2+).

Functionally, potential calcium sensor. This Oryza sativa subsp. japonica (Rice) protein is Probable calcium-binding protein CML30 (CML30).